The sequence spans 369 residues: MTQKTILNDTHRALGAKMVDFGGWDMPIHYGSQIDEHHQVRRDAGMFDVSHMTVVDLHGVRVREFLRYLLANSVDKLKVSGKALYTCMLNPQGGVIDDLIVYFMQEEFFRLVVNAATRDKDLQWIGEQAARFEVRVKERADFAMIAVQGPNARSKVIDLLDPADASAASKLGRFAALQTRTRDGVALFLARTGYTGEDGFEIVLPQADAVAFWNALLAHGVAPAGLGARDTLRLEAGMNLYGQDMDDNVTPYEAALAWTITLDEGRDFIGRSVLESQKAQGAPRQMIGVVMDEKGVLRHGQKVLSAGGEGEILSGTFSPTLGKAIAFARVPAGSIDDLRVDIRGKQVPLRAVKFPFVRDGQAQPGVLGA.

It belongs to the GcvT family. As to quaternary structure, the glycine cleavage system is composed of four proteins: P, T, L and H.

The catalysed reaction is N(6)-[(R)-S(8)-aminomethyldihydrolipoyl]-L-lysyl-[protein] + (6S)-5,6,7,8-tetrahydrofolate = N(6)-[(R)-dihydrolipoyl]-L-lysyl-[protein] + (6R)-5,10-methylene-5,6,7,8-tetrahydrofolate + NH4(+). Functionally, the glycine cleavage system catalyzes the degradation of glycine. This chain is Aminomethyltransferase, found in Xanthomonas campestris pv. campestris (strain 8004).